The primary structure comprises 780 residues: Cullin-5 (780 aa).

Serine 34 bears the Phosphoserine mark. Threonine 210 carries the post-translational modification Phosphothreonine. Residues 711 to 772 (RILRTQEAII…HKYIRRDESD (62 aa)) form the Cullin neddylation domain. A Glycyl lysine isopeptide (Lys-Gly) (interchain with G-Cter in NEDD8) cross-link involves residue lysine 724.

It belongs to the cullin family. As to quaternary structure, component of multiple cullin-5-RING E3 ubiquitin-protein ligase complexes (ECS complexes, also named CRL5 complexes) formed of CUL5, Elongin BC (ELOB and ELOC), RNF7/RBX2 and a variable SOCS box domain-containing protein as substrate-specific recognition component. CUL5-containing ECS complexes specifically contain RNF7/RBX2, and not RBX1, as catalytic subunit. Component of the ECS(ASB2) complex with the substrate recognition component ASB2. Component of the ECS(ASB6) complex with the substrate recognition component ASB6. Component of the ECS(ASB7) complex with the substrate recognition component ASB7. Component of the ECS(ASB9) complex with the substrate recognition component ASB9. Component of the ECS(ASB11) complex with the substrate recognition component ASB11. Component of the ECS(ASB12) complex with the substrate recognition component ASB12. Component of the ECS(LRRC41) complex with the substrate recognition component LRRC41. Component of the ECS(SOCS1) complex with the substrate recognition component SOCS1. Component of the ECS(SOCS2) complex with the substrate recognition component SOCS2. Component of the ECS(WSB1) complex with the substrate recognition subunit WSB1. Component of the ECS(SOCS3) complex with the substrate recognition component SOCS3. Component of the ECS(SOCS7) complex with the substrate recognition component SOCS7. Component of the ECS(SPSB1) complex with the substrate recognition component SPSB1. Component of the ECS(SPSB3) complex with the substrate recognition component SPSB3. Component of the ECS(SPSB2) complex with the substrate recognition component SPSB2. Component of the ECS(SPSB4) complex with the substrate recognition component SPSB4. Component of the ECS(RAB40) complex with the substrate recognition subunit RAB40A, RAB40B or RAB40C. Component of the ECS(KLHDC1) complex with the substrate recognition component KLHDC1. Component of the ECS(PCMTD1) complex with the substrate recognition subunit PCMTD1. May also form complexes containing RBX1 and ELOA or VHL; additional evidence is however required to confirm this result in vivo. Interacts (when neddylated) with ARIH2; leading to activate the E3 ligase activity of ARIH2. Interacts with ERCC6; the interaction is induced by DNA damaging agents or inhibitors of RNA polymerase II elongation. Interacts with ELOA (via the BC-box). Interacts (unneddylated form) with DCUN1D1, DCUN1D2, DCUN1D3, DCUN1D4 and DCUN1D5; these interactions promote the cullin neddylation. Post-translationally, neddylated; which enhances the ubiquitination activity of ECS complexes and prevents binding of the inhibitor CAND1. Deneddylated via its interaction with the COP9 signalosome (CSN).

The protein resides in the nucleus. Its pathway is protein modification; protein ubiquitination. Core component of multiple cullin-5-RING E3 ubiquitin-protein ligase complexes (ECS complexes, also named CRL5 complexes), which mediate the ubiquitination and subsequent proteasomal degradation of target proteins. Acts a scaffold protein that contributes to catalysis through positioning of the substrate and the ubiquitin-conjugating enzyme. The functional specificity of the E3 ubiquitin-protein ligase complex depends on the variable SOCS box-containing substrate recognition component. Acts as a key regulator of neuron positioning during cortex development: component of various SOCS-containing ECS complexes, such as the ECS(SOCS7) complex, that regulate reelin signaling by mediating ubiquitination and degradation of DAB1. ECS(SOCS1) seems to direct ubiquitination of JAK2. The ECS(SOCS2) complex mediates the ubiquitination and subsequent proteasomal degradation of phosphorylated EPOR and GHR. The ECS(SPSB3) complex catalyzes ubiquitination of nuclear CGAS. ECS(KLHDC1) complex is part of the DesCEND (destruction via C-end degrons) pathway and mediates ubiquitination and degradation of truncated SELENOS selenoprotein produced by failed UGA/Sec decoding, which ends with a glycine. The ECS(ASB9) complex mediates ubiquitination and degradation of CKB. As part of some ECS complex, promotes 'Lys-11'-linked ubiquitination and degradation of BTRC. As part of a multisubunit ECS complex, polyubiquitinates monoubiquitinated POLR2A. As part of the ECS(RAB40C) complex, mediates ANKRD28 ubiquitination and degradation, thereby regulating protein phosphatase 6 (PP6) complex activity and focal adhesion assembly during cell migration. As part of the ECS(RAB40A) complex, mediates RHOU 'Lys-48'-linked ubiquitination and degradation, thus inhibiting focal adhesion disassembly during cell migration. As part of the ECS(RAB40B) complex, mediates LIMA1/EPLIN and RAP2 ubiquitination, thereby regulating actin cytoskeleton dynamics and stress fiber formation during cell migration. May form a cell surface vasopressin receptor. The sequence is that of Cullin-5 from Pongo abelii (Sumatran orangutan).